The sequence spans 350 residues: tRNA uridine(34) hydroxylase (350 aa).

The region spanning 146–240 is the Rhodanese domain; it reads DDPDALFIDM…YARKAREQGL (95 aa). Cys200 acts as the Cysteine persulfide intermediate in catalysis.

Belongs to the TrhO family.

The enzyme catalyses uridine(34) in tRNA + AH2 + O2 = 5-hydroxyuridine(34) in tRNA + A + H2O. In terms of biological role, catalyzes oxygen-dependent 5-hydroxyuridine (ho5U) modification at position 34 in tRNAs, the first step in 5-carboxymethoxyuridine (cmo5U) biosynthesis. May be part of an alternate pathway, which is able to bypass cmo5U biogenesis in a subset of tRNAs under aerobic conditions. This chain is tRNA uridine(34) hydroxylase, found in Escherichia coli O17:K52:H18 (strain UMN026 / ExPEC).